A 126-amino-acid polypeptide reads, in one-letter code: Small ribosomal subunit protein eS8 (126 aa).

Polar residues predominate over residues 1-10 (MAIWQGSSLR). Residues 1 to 35 (MAIWQGSSLRKPSGARSRRNKNKRNAEFGRNPAET) are disordered.

Belongs to the eukaryotic ribosomal protein eS8 family. In terms of assembly, part of the 30S ribosomal subunit.

This chain is Small ribosomal subunit protein eS8, found in Methanosphaera stadtmanae (strain ATCC 43021 / DSM 3091 / JCM 11832 / MCB-3).